The sequence spans 86 residues: Protein YwqI (86 aa).

Residues 57–83 (DYKKAVQKNIEDTKDNVDSLKEQDEAI) are a coiled coil.

In Bacillus subtilis (strain 168), this protein is Protein YwqI (ywqI).